The sequence spans 364 residues: Cobalt-precorrin-5B C(1)-methyltransferase (364 aa).

The protein belongs to the CbiD family.

The catalysed reaction is Co-precorrin-5B + S-adenosyl-L-methionine = Co-precorrin-6A + S-adenosyl-L-homocysteine. It functions in the pathway cofactor biosynthesis; adenosylcobalamin biosynthesis; cob(II)yrinate a,c-diamide from sirohydrochlorin (anaerobic route): step 6/10. Catalyzes the methylation of C-1 in cobalt-precorrin-5B to form cobalt-precorrin-6A. The sequence is that of Cobalt-precorrin-5B C(1)-methyltransferase from Pseudomonas entomophila (strain L48).